Consider the following 35-residue polypeptide: Mu-theraphotoxin-Hhn1a (35 aa).

Cystine bridges form between cysteine 2–cysteine 17, cysteine 9–cysteine 24, and cysteine 16–cysteine 31.

The protein belongs to the neurotoxin 10 (Hwtx-1) family. 22 (Htx-4) subfamily. As to quaternary structure, monomer. Expressed by the venom gland.

Its subcellular location is the secreted. In terms of biological role, inhibits selectively tetrodotoxin-sensitive voltage-gated sodium channels (Nav). Does not act by binding to receptor site 3 to slow the inactivation kinetics of sodium currents. This is Mu-theraphotoxin-Hhn1a from Cyriopagopus hainanus (Chinese bird spider).